We begin with the raw amino-acid sequence, 906 residues long: Probable disease resistance RPP8-like protein 2 (906 aa).

Residues 15–68 (ELLSRESARLNGIDEQVDGLKRQLGRLQSLLKDADAKKNETERVRNFLEDVKDI) are a coiled coil. In terms of domain architecture, NB-ARC spans 144–454 (LQERQREIRQ…AEGIITPFHD (311 aa)). 190-197 (GMGGIGKT) contacts ATP. 10 LRR repeats span residues 573–597 (LPLL…SIGD), 598–621 (LIHL…LGNL), 623–644 (LLLC…NVLK), 646–671 (MQEL…DLVN), 672–696 (LESL…KLSV), 704–727 (ECTF…SFHD), 740–766 (LLVL…QYRF), 767–790 (PPHL…ILEK), 791–818 (LLHL…GFPQ), and 840–865 (MPCL…KYVT).

Belongs to the disease resistance NB-LRR family. RPP8/HRT subfamily.

Its function is as follows. Potential disease resistance protein. The sequence is that of Probable disease resistance RPP8-like protein 2 (RPP8L2) from Arabidopsis thaliana (Mouse-ear cress).